A 432-amino-acid polypeptide reads, in one-letter code: Zinc finger protein 829 (432 aa).

The KRAB domain maps to Val-35–Ser-106. The segment at Trp-156–His-178 adopts a C2H2-type 1 zinc-finger fold. The C2H2-type 2; degenerate zinc finger occupies Tyr-184–His-206. 8 consecutive C2H2-type zinc fingers follow at residues Tyr-212–His-234, Tyr-240–His-262, Tyr-268–His-290, Tyr-296–His-318, Tyr-324–His-346, Tyr-352–His-374, Tyr-380–His-402, and Tyr-408–His-430.

The protein belongs to the krueppel C2H2-type zinc-finger protein family.

It localises to the nucleus. Functionally, may be involved in transcriptional regulation. The sequence is that of Zinc finger protein 829 (ZNF829) from Homo sapiens (Human).